The chain runs to 308 residues: Porphobilinogen deaminase (308 aa).

C240 bears the S-(dipyrrolylmethanemethyl)cysteine mark.

Belongs to the HMBS family. Monomer. The cofactor is dipyrromethane.

It carries out the reaction 4 porphobilinogen + H2O = hydroxymethylbilane + 4 NH4(+). It functions in the pathway porphyrin-containing compound metabolism; protoporphyrin-IX biosynthesis; coproporphyrinogen-III from 5-aminolevulinate: step 2/4. In terms of biological role, tetrapolymerization of the monopyrrole PBG into the hydroxymethylbilane pre-uroporphyrinogen in several discrete steps. The polypeptide is Porphobilinogen deaminase (Laribacter hongkongensis (strain HLHK9)).